Reading from the N-terminus, the 435-residue chain is F-box/FBD/LRR-repeat protein At5g44980 (435 aa).

Residues 3–49 form the F-box domain; that stretch reads RDYISELPDSLLTQILLELRTKDSVKTSVLSKRWRNLWLNVPGLELF. LRR repeat units follow at residues 88–114, 138–162, 165–190, 191–217, 250–275, and 324–349; these read CKGY…YVFM, LHNV…KLEN, HGED…ELIR, PFDI…TLHF, VKNL…DLRM, and MWSS…ILEY. Positions 355–405 constitute an FBD domain; the sequence is REQVDFTNVPQCLISTLEYVEIKEPNEKSTIKLVNYFLENSAVLKKLTLRF.

The sequence is that of F-box/FBD/LRR-repeat protein At5g44980 from Arabidopsis thaliana (Mouse-ear cress).